The following is a 539-amino-acid chain: Cytochrome P450 monooxygenase buaD (539 aa).

The signal sequence occupies residues 1–16 (MLVPVLTLLGTLTATG). The N-linked (GlcNAc...) asparagine glycan is linked to N120. C478 lines the heme pocket. N520 is a glycosylation site (N-linked (GlcNAc...) asparagine).

This sequence belongs to the cytochrome P450 family. Heme is required as a cofactor.

It functions in the pathway mycotoxin biosynthesis. Its function is as follows. Cytochrome P450 monooxygenase; part of the gene cluster that mediates the biosynthesis of burnettramic acids, an unusual class of bolaamphiphilic pyrrolizidinediones that display potent antibacterial, antifungal, and cytotoxic activities. The first step of the biosynthesis of burnettramic acids is the hydroxylation of proline by the proline hydroxylase buaE to generate 4-hydroxyproline. The PKS-NRPS buaA and trans-enoyl reductase buaC construct the highly reduced polyketide chain, and the condensation (C) domain of buaA then catalyzes the amide bond formation with the activated 4-hydroxyproline. This is followed by the R domain releasing the nascent polyketide-peptide directly via a Dieckmann condensation to afford a tetramic acid fused to the hydroxyproline, generating the bicyclic pyrrolidinedione moiety. The cytochrome P450 monooxygenases buaD and buaG are likely responsible for the multiple hydroxylations on the polyketide chain and its terminus, although in the heterologous context, buaD does not appear to be required. Therefore, while buaG may be a multifunctional cytochrome P450 monooxygenase, it cannot be ruled out that the two secondary alcohols on the polyketide chain could have an acetate origin. Finally, the glycosyltransferase buaB transfers beta-D-mannose to the aglycone burnettramic acid A to form burnettramic acid A. Burnettramic acid B is a minor cis-pyrrolizidine epimer of burnettramic acid A and it is likely that small amounts of it form naturally in acidic environments. In Petromyces alliaceus (Aspergillus alliaceus), this protein is Cytochrome P450 monooxygenase buaD.